The following is a 125-amino-acid chain: Small ribosomal subunit protein bS6 (125 aa).

Positions Glu96–Arg125 are disordered. Positions Thr105–Ser115 are enriched in basic and acidic residues.

Belongs to the bacterial ribosomal protein bS6 family.

Binds together with bS18 to 16S ribosomal RNA. This Paracidovorax citrulli (strain AAC00-1) (Acidovorax citrulli) protein is Small ribosomal subunit protein bS6.